A 293-amino-acid polypeptide reads, in one-letter code: MQKGPLSLATVSHTETFWRKVGPKRDGLGTGDGLHSWVLQEPVSTGDNPRECDSQGTSKDTLVREGKTYKCKECGKVFNKNSLLVRHHQIHAGVKTYECQECGKAFHEKVDFVRHMRIHSGEKPCKCVECGKVFNRRSHLLCYHQIHTGEKPYECSECGKTFSYHSVFIQHRMTHTGEKLFGCKECGKTFYYNSSLTRHMKIHTGEKPYKCGECGKTFTYHSVFFRHSMTHTAGKPYECKECGKGFYYSYSLTRHTRSHTGEKPYECLEHRKAFGYHSAFAQQSKIHSGGKNL.

C2H2-type zinc fingers lie at residues 69–91 (YKCK…HQIH) and 97–119 (YECQ…MRIH). The C2H2-type 3; atypical zinc-finger motif lies at 125 to 147 (CKCVECGKVFNRRSHLLCYHQIH). C2H2-type zinc fingers lie at residues 153–175 (YECS…RMTH), 181–203 (FGCK…MKIH), 209–231 (YKCG…SMTH), and 237–259 (YECK…TRSH).

This sequence belongs to the krueppel C2H2-type zinc-finger protein family.

It localises to the nucleus. Its function is as follows. May be involved in transcriptional regulation. This Macaca mulatta (Rhesus macaque) protein is Zinc finger protein 80 (ZNF80).